The chain runs to 100 residues: Transcription elongation factor A protein-like 7 (100 aa).

A compositionally biased stretch (basic and acidic residues) spans 1-32 (MQKPCKENEGKPKCSVPKREEKRPYGEFERQQ). Residues 1 to 34 (MQKPCKENEGKPKCSVPKREEKRPYGEFERQQTE) are disordered. A coiled-coil region spans residues 60-88 (EEMTREGDEMERCLEEIRGLRKKFRALHS).

It belongs to the TFS-II family. TFA subfamily. In terms of tissue distribution, highly expressed in normal and fetal brain tissues, and weakly expressed in uterus and ovary. Down-regulated in epithelial ovarian, cervical, prostate, breast, brain and lung cancer cell lines and in brain and ovarian tumors.

The protein resides in the nucleus. Its function is as follows. Plays a role in the negative regulation of NF-kappa-B signaling at the basal level by modulating transcriptional activity of NF-kappa-B on its target gene promoters. Associates with cyclin D1 promoter containing Myc E-box sequence and transcriptionally represses cyclin D1 expression. Regulates telomerase reverse transcriptase expression and telomerase activity in both ALT (alternative lengthening of telomeres)and telomerase-positive cell lines. In Homo sapiens (Human), this protein is Transcription elongation factor A protein-like 7 (TCEAL7).